The following is an 89-amino-acid chain: Small ribosomal subunit protein uS14 (89 aa).

The protein belongs to the universal ribosomal protein uS14 family. In terms of assembly, part of the 30S ribosomal subunit. Contacts proteins S3 and S10.

Its function is as follows. Binds 16S rRNA, required for the assembly of 30S particles and may also be responsible for determining the conformation of the 16S rRNA at the A site. This chain is Small ribosomal subunit protein uS14, found in Shouchella clausii (strain KSM-K16) (Alkalihalobacillus clausii).